Reading from the N-terminus, the 461-residue chain is MMKSSNKSSGSLIRLDKKHIYIQTLGCQMNVHDSEQIAALMEEKGYICTEDANEADLIILNTCSIREKAAQKAKSQLGRYRNLKRKKRNLLIGVGGCLAQQLGDELLTKVPDIDFIFGTHNIHQLPDFISRIEKSRKKIVETTLHPSTPSIGVLALPCNGQVSSFVTIMQGCNNFCSYCIVPYVRGREESRPPEDIIHEIRMLADHGVKEVTLLGQNVNSYARKTSGEMGFAELLREIEKIKGIERMRFTTSHPKDLSEFLITAFSDLSKLCHHIHLPFQSGSDRILALMNRGYTKSDYLAKVERLRTVCPDISITADVIVGFPGESDEDFKETIDMMNQIRFDNLFSFKYSEREGTAAVKMDGKVSEPLKLERLQILQALQEQHTLEKNKAMEGKQEDVLVEGFSKNCRKDLTGRTSTNKIVNFSGCVDLIGDMVSVLIKEAYLHSLRGEMLCEEVVHAN.

An MTTase N-terminal domain is found at 18–134 (KHIYIQTLGC…LPDFISRIEK (117 aa)). [4Fe-4S] cluster contacts are provided by C27, C63, C97, C172, C176, and C179. In terms of domain architecture, Radical SAM core spans 158 to 388 (CNGQVSSFVT…QALQEQHTLE (231 aa)). Residues 391 to 454 (KAMEGKQEDV…LHSLRGEMLC (64 aa)) enclose the TRAM domain.

The protein belongs to the methylthiotransferase family. MiaB subfamily. As to quaternary structure, monomer. [4Fe-4S] cluster is required as a cofactor.

The protein resides in the cytoplasm. The catalysed reaction is N(6)-dimethylallyladenosine(37) in tRNA + (sulfur carrier)-SH + AH2 + 2 S-adenosyl-L-methionine = 2-methylsulfanyl-N(6)-dimethylallyladenosine(37) in tRNA + (sulfur carrier)-H + 5'-deoxyadenosine + L-methionine + A + S-adenosyl-L-homocysteine + 2 H(+). Its function is as follows. Catalyzes the methylthiolation of N6-(dimethylallyl)adenosine (i(6)A), leading to the formation of 2-methylthio-N6-(dimethylallyl)adenosine (ms(2)i(6)A) at position 37 in tRNAs that read codons beginning with uridine. The chain is tRNA-2-methylthio-N(6)-dimethylallyladenosine synthase from Syntrophus aciditrophicus (strain SB).